Consider the following 632-residue polypeptide: MAEETQHNKLAAAKKKLKEYWQKNSPRVPAGANRNRKTNGSIPQTATSGGCQPPGDSATGFHREGPTSSATLKDLESPCQERAVVLDSRSVEISQLKNTIKSLKQQKKQVEHQLEEEKKANIKKQKAKRVLEVQIQTLNIQKEELNTDLYHMKRSLRYFEEKSKDLAVRLQHSLQRKGELESVLSDVMATQKKKANQLSSPSKAGTEWKLEQSMREEALLKVQLTQLKESFQQLQLERHEYAEHLKGERARWQQRMRKMSQEICTLKKEKQQDMRRVEKLERSLSKLKNQMAEPLPPEPPAVPSEVELQHLRKELERVAGALQAQVKNNQRISLLNRGQEERIREQEERLRKQEERIQEQHKSLQQLAKPQSVFEEPNNENKSALQLEQQVKELQEKLGEEHLEAASQQNQQLTAQLSLMALPGEGHGGEHLDSEGEEAPQPMPSVPEDLESREAMSSFMDHLEEKADLSELVKKKELCFIHHWRERCHQKTHHLLSEPGGRAKDAALGGGHHQAGAQGGDEGEAAGAAADGIAAYSNYNNGHRKFLAAAHNPADEPGPGAPAPQELGAADKHGDLCEVSLTSSAQGEAREDPLLDKPTAQPIVQDHQEHPGLGSNCCVPFFCWAWLPRRRR.

A disordered region spans residues 1–77 (MAEETQHNKL…SSATLKDLES (77 aa)). Polar residues predominate over residues 38 to 50 (TNGSIPQTATSGG). Coiled coils occupy residues 86–154 (LDSR…HMKR) and 209–421 (KLEQ…SLMA). Over residues 352-362 (KQEERIQEQHK) the composition is skewed to basic and acidic residues. Disordered stretches follow at residues 352–383 (KQEERIQEQHKSLQQLAKPQSVFEEPNNENKS), 423–445 (PGEGHGGEHLDSEGEEAPQPMPS), 496–524 (LSEPGGRAKDAALGGGHHQAGAQGGDEGE), and 550–569 (AHNPADEPGPGAPAPQELGA). Gly residues predominate over residues 508 to 520 (LGGGHHQAGAQGG). Positions 529–632 (AADGIAAYSN…CWAWLPRRRR (104 aa)) are golgi-targeting domain. Residues 555–568 (DEPGPGAPAPQELG) show a composition bias toward low complexity.

The protein belongs to the GOLGA8 family.

Its subcellular location is the golgi apparatus. It is found in the golgi stack membrane. In terms of biological role, may be involved in maintaining Golgi structure. This is Putative golgin subfamily A member 8I from Homo sapiens (Human).